The following is a 512-amino-acid chain: Maturase K (512 aa).

Belongs to the intron maturase 2 family. MatK subfamily.

It is found in the plastid. Its subcellular location is the chloroplast. Usually encoded in the trnK tRNA gene intron. Probably assists in splicing its own and other chloroplast group II introns. This is Maturase K from Piper cenocladum (Ant piper).